A 374-amino-acid chain; its full sequence is Ferroptosis suppressor protein 1 (374 aa).

G2 is lipidated: N-myristoyl glycine. Residues 13 to 35 traverse the membrane as a helical segment; sequence VVIVGGGFAGIAAATQLKSFGIP. Residues 17–21, R53, and V81 each bind 6-hydroxy-FAD; that span reads GGGFA. The residue at position 167 (K167) is an N6-acetyllysine. Position 285 (D285) interacts with 6-hydroxy-FAD.

Belongs to the FAD-dependent oxidoreductase family. The cofactor is 6-hydroxy-FAD. Post-translationally, N-myristoylation at Gly-2 mediates the recruitment to lipid droplets and plasma membrane. In terms of processing, acetylation at Lys-167 prevents AIFM2 ubiquitination and degradation, thereby inhibiting ferroptosis. KAT2B mediates acetylation at Lys-167, while HDAC3 removes it. Ubiquitinated. AIFM2 undergoes 'Lys-29'-ubiquitination and proteasomal degradation, which is inhibited by acetylation at Lys-167.

It is found in the lipid droplet. The protein localises to the cell membrane. It localises to the cytoplasm. Its subcellular location is the mitochondrion membrane. The protein resides in the nucleus. The enzyme catalyses ubiquinone-10 + NADH + H(+) = ubiquinol-10 + NAD(+). It catalyses the reaction phylloquinone + NADH + H(+) = phylloquinol + NAD(+). It carries out the reaction menaquinone-4 + NADH + H(+) = menaquinol-4 + NAD(+). The catalysed reaction is menadione + NADH + H(+) = menadiol + NAD(+). Its activity is regulated as follows. The modification by 4-hydroxy-2-nonenal (HNE) adduction in mitochondria results in loss of the oxidoreductase activity and activation of a novel function in mitochondrial oxidative stress signaling. Functionally, a NAD(P)H-dependent oxidoreductase that acts as a key inhibitor of ferroptosis. At the plasma membrane, catalyzes reduction of coenzyme Q/ubiquinone-10 to ubiquinol-10, a lipophilic radical-trapping antioxidant that prevents lipid oxidative damage and consequently ferroptosis. Acts in parallel to GPX4 to suppress phospholipid peroxidation and ferroptosis. This anti-ferroptotic function is independent of cellular glutathione levels. Also acts as a potent radical-trapping antioxidant by mediating warfarin-resistant vitamin K reduction in the canonical vitamin K cycle: catalyzes NAD(P)H-dependent reduction of vitamin K (phylloquinone, menaquinone-4 and menadione) to hydroquinone forms. Hydroquinones act as potent radical-trapping antioxidants inhibitor of phospholipid peroxidation and ferroptosis. May play a role in mitochondrial stress signaling. Upon oxidative stress, associates with the lipid peroxidation end product 4-hydroxy-2-nonenal (HNE) forming a lipid adduct devoid of oxidoreductase activity, which then translocates from mitochondria into the nucleus triggering DNA damage and cell death. The polypeptide is Ferroptosis suppressor protein 1 (aifm2) (Xenopus tropicalis (Western clawed frog)).